The primary structure comprises 655 residues: Kelch-like protein 13 (655 aa).

Residues 92 to 161 (CDVTLMPGDT…IYTAKLSLNM (70 aa)) form the BTB domain. In terms of domain architecture, BACK spans 196–297 (CVEVGRIANT…TPQELINYVQ (102 aa)). 6 Kelch repeats span residues 341–389 (HLVT…VIGN), 390–441 (FLYV…ALKG), 442–488 (YLYA…VYGG), 490–535 (MYIS…TVGE), 537–587 (LYVI…VFEN), and 588–636 (KIYV…TLTV).

In terms of assembly, component of the BCR(KLHL9-KLHL13) E3 ubiquitin ligase complex, at least composed of CUL3, KLHL9, KLHL13 and RBX1. Interacts with AURKB.

It functions in the pathway protein modification; protein ubiquitination. In terms of biological role, substrate-specific adapter of a BCR (BTB-CUL3-RBX1) E3 ubiquitin-protein ligase complex required for mitotic progression and cytokinesis. The BCR(KLHL9-KLHL13) E3 ubiquitin ligase complex mediates the ubiquitination of AURKB and controls the dynamic behavior of AURKB on mitotic chromosomes and thereby coordinates faithful mitotic progression and completion of cytokinesis. In Bos taurus (Bovine), this protein is Kelch-like protein 13 (KLHL13).